A 338-amino-acid chain; its full sequence is Ornithine carbamoyltransferase (338 aa).

Carbamoyl phosphate-binding positions include 56–59 (STRT), glutamine 83, arginine 107, and 134–137 (HPTQ). Residues asparagine 168, aspartate 232, and 236 to 237 (SM) contribute to the L-ornithine site. Carbamoyl phosphate-binding positions include 274–275 (CL) and arginine 320.

Belongs to the aspartate/ornithine carbamoyltransferase superfamily. OTCase family.

The protein resides in the cytoplasm. The catalysed reaction is carbamoyl phosphate + L-ornithine = L-citrulline + phosphate + H(+). Its pathway is amino-acid biosynthesis; L-arginine biosynthesis; L-arginine from L-ornithine and carbamoyl phosphate: step 1/3. Reversibly catalyzes the transfer of the carbamoyl group from carbamoyl phosphate (CP) to the N(epsilon) atom of ornithine (ORN) to produce L-citrulline. The polypeptide is Ornithine carbamoyltransferase (Photorhabdus laumondii subsp. laumondii (strain DSM 15139 / CIP 105565 / TT01) (Photorhabdus luminescens subsp. laumondii)).